A 91-amino-acid polypeptide reads, in one-letter code: Small ribosomal subunit protein uS19 (91 aa).

The protein belongs to the universal ribosomal protein uS19 family.

Functionally, protein S19 forms a complex with S13 that binds strongly to the 16S ribosomal RNA. This Synechococcus elongatus (strain ATCC 33912 / PCC 7942 / FACHB-805) (Anacystis nidulans R2) protein is Small ribosomal subunit protein uS19.